We begin with the raw amino-acid sequence, 345 residues long: MRVADFSFELPDELIARYPTAERTASRLLSLDGNSGELTDLQFTDILEQVNLGDLMVFNNTRVIPARMFGQKQSGGKLEILVERMLDDKRVLAHVRCSKSPKVDSIICLDGGYEMIMVARHDALFELELQSDKTILEVLEDVGHMPLPPYIDRPDEDADKERYQTVYNQNPGAVAAPTAGLHFDDAMLAALKDKGVNTAFVTLHVGAGTFQPVRVDNILDHKMHSEWAEVPQNVVDLIAETKTRGNRVIAVGTTSVRSLESAAKASPEQLEAFSGDTDIFIYPGYQFQVVDAMVTNFHLPESTLIMLLSAFAGFDEVKNAYQHAIAQKYRFFSYGDAMFVTKKAN.

The protein belongs to the QueA family. In terms of assembly, monomer.

It is found in the cytoplasm. It carries out the reaction 7-aminomethyl-7-carbaguanosine(34) in tRNA + S-adenosyl-L-methionine = epoxyqueuosine(34) in tRNA + adenine + L-methionine + 2 H(+). It participates in tRNA modification; tRNA-queuosine biosynthesis. In terms of biological role, transfers and isomerizes the ribose moiety from AdoMet to the 7-aminomethyl group of 7-deazaguanine (preQ1-tRNA) to give epoxyqueuosine (oQ-tRNA). The protein is S-adenosylmethionine:tRNA ribosyltransferase-isomerase of Shewanella halifaxensis (strain HAW-EB4).